The primary structure comprises 178 residues: MNTPVSVNEKKDFVKWFLNNYQLKQRECVWILNYLMSHDQLMHKVHFVEHAKYCPRGLVMSANCVKDTPFHFFKQNVMTTDAEKSFHDIRLNRDEDIYIQLNFKSSFQNANYVAVLEENPYLPKHIEVNEKDRLLAERFLEESVFSFRRERLLKQIDEALDKQDKEAFHRLTAELKML.

It belongs to the UPF0302 family.

The chain is UPF0302 protein BCAH187_A1683 from Bacillus cereus (strain AH187).